A 198-amino-acid chain; its full sequence is ATP-dependent Clp protease proteolytic subunit (198 aa).

Residue serine 98 is the Nucleophile of the active site. Histidine 123 is a catalytic residue.

Belongs to the peptidase S14 family. In terms of assembly, fourteen ClpP subunits assemble into 2 heptameric rings which stack back to back to give a disk-like structure with a central cavity, resembling the structure of eukaryotic proteasomes.

Its subcellular location is the cytoplasm. The enzyme catalyses Hydrolysis of proteins to small peptides in the presence of ATP and magnesium. alpha-casein is the usual test substrate. In the absence of ATP, only oligopeptides shorter than five residues are hydrolyzed (such as succinyl-Leu-Tyr-|-NHMec, and Leu-Tyr-Leu-|-Tyr-Trp, in which cleavage of the -Tyr-|-Leu- and -Tyr-|-Trp bonds also occurs).. Its function is as follows. Cleaves peptides in various proteins in a process that requires ATP hydrolysis. Has a chymotrypsin-like activity. Plays a major role in the degradation of misfolded proteins. The polypeptide is ATP-dependent Clp protease proteolytic subunit (Listeria innocua serovar 6a (strain ATCC BAA-680 / CLIP 11262)).